Consider the following 495-residue polypeptide: MSKLQIIQSKGQYINGEWIKGNGLILESTNPASGTLLWQGNNATDEEITHACYIAHCALKSWANTSFEERARYTIAFVEQVEKNRDQLARLISLETGKPLWESQTEVSSVIGKVNLSIQAYQERTWPKQTETAEANACLRFKPHGVVVVLGAFNFPAHLSNGHIVPALLAGNTVLYKPSEHTPAVAELIIQCWHNSGLPPGVINCLQGNANCGNTLLSQDIQGVYFTGSYATGLRIHQQFCNRPEVILALEMGGNNPLVIDEVKDINAAVYHTMLSTMITAGQRCTCARRIIIPDSQTGDLFLERFAKACKLMRIGSFDSQPEPFIGPVINHVQALKHLHAQKQLIEIGGEIILPMSLLVEYTGLISPGIIDMTRAKNPPDEEIFAPFAQIYRYNHFDEAIQLANQTRYGLSAGLLSDNKDHYLQFYQHIRAGLINWNRPTTGAASSLPFGGVGCSGNHRPSAYFAADYCAYPVASMEQPLLTTPAQRLPGLVLE.

Residue Gly-228–Gly-233 coordinates NAD(+). Residues Glu-251 and Cys-285 contribute to the active site.

The protein belongs to the aldehyde dehydrogenase family. AstD subfamily.

The catalysed reaction is N-succinyl-L-glutamate 5-semialdehyde + NAD(+) + H2O = N-succinyl-L-glutamate + NADH + 2 H(+). It participates in amino-acid degradation; L-arginine degradation via AST pathway; L-glutamate and succinate from L-arginine: step 4/5. Catalyzes the NAD-dependent reduction of succinylglutamate semialdehyde into succinylglutamate. In Legionella pneumophila (strain Paris), this protein is N-succinylglutamate 5-semialdehyde dehydrogenase.